The primary structure comprises 133 residues: p53 and DNA damage-regulated protein 1 (133 aa).

The protein belongs to the prefoldin subunit beta family. Component of the PAQosome complex which is responsible for the biogenesis of several protein complexes and which consists of R2TP complex members RUVBL1, RUVBL2, RPAP3 and PIH1D1, URI complex members PFDN2, PFDN6, PDRG1, UXT and URI1 as well as ASDURF, POLR2E and DNAAF10/WDR92.

It is found in the cytoplasm. Its function is as follows. May play a role in chaperone-mediated protein folding. This Bos taurus (Bovine) protein is p53 and DNA damage-regulated protein 1 (PDRG1).